A 760-amino-acid chain; its full sequence is Xaa-Pro dipeptidyl-peptidase (760 aa).

Residues Ser-349, Asp-469, and His-499 each act as charge relay system in the active site.

It belongs to the peptidase S15 family. Homodimer.

It is found in the cytoplasm. The enzyme catalyses Hydrolyzes Xaa-Pro-|- bonds to release unblocked, N-terminal dipeptides from substrates including Ala-Pro-|-p-nitroanilide and (sequentially) Tyr-Pro-|-Phe-Pro-|-Gly-Pro-|-Ile.. Removes N-terminal dipeptides sequentially from polypeptides having unsubstituted N-termini provided that the penultimate residue is proline. The protein is Xaa-Pro dipeptidyl-peptidase of Streptococcus pyogenes serotype M18 (strain MGAS8232).